The following is a 532-amino-acid chain: MSDIFSHTALSNLAEFSVSELSGSIKRTVETAFEQVRVRGEISGYRGPHSSGHAYFSLKDDRARIDAVIWKGTFSRLKFRPEEGMEVIATGKITTFPGSSKYQIVIESLEPAGAGALMALLEDRRRRLAAEGLFDSARKRPLPFMPRVIGVVTSPTGAVIRDILHRISDRFPVHVVVWPVKVQGEGSGEEVANAIRGFNALKPGGDIARPDVLIVARGGGSLEDLWSFNDEIVVRAAAESEIPLISAVGHETDTTLIDYAADVRAPTPTGAAEMAVPVRAELEAQLSGLAARLSGSVSRQMDNRRQGVRALVRALPSLDQLLALPRRRFDEAASGLGRGLELTTLNKRRAFERSASGLRPETLLNGLKHHRQRITERMHRAETLVERRLLQGKGRVDSFDSALRSLPARLLGQLERQKERVVTAARRADTAVLHRMAQNRSGLAAHDRILQSLSYKNVLNRGYAVIRDEENRPLTRAAAIASGAAVSMEFADGRVSAITTGEGTPAPETAAAPKKKPAKPASSDPGNQGNLF.

Residues 497 to 532 (AITTGEGTPAPETAAAPKKKPAKPASSDPGNQGNLF) form a disordered region. Low complexity predominate over residues 499–512 (TTGEGTPAPETAAA).

It belongs to the XseA family. Heterooligomer composed of large and small subunits.

It is found in the cytoplasm. The enzyme catalyses Exonucleolytic cleavage in either 5'- to 3'- or 3'- to 5'-direction to yield nucleoside 5'-phosphates.. Its function is as follows. Bidirectionally degrades single-stranded DNA into large acid-insoluble oligonucleotides, which are then degraded further into small acid-soluble oligonucleotides. The polypeptide is Exodeoxyribonuclease 7 large subunit (Agrobacterium fabrum (strain C58 / ATCC 33970) (Agrobacterium tumefaciens (strain C58))).